The following is a 341-amino-acid chain: MSEPARIAINGFGRIGRSFLRALYENGYRDSVQVVLINEPAASEAIAHLLKYDSSHGRFGEKVTQSGDALTVAGDNIALTHQTEIEAIDWRAHEVDFVVDCTGVFGSQADGQLYLQQGVKRVLFSHPGKPDVDFTAIYGVNEKELTVDHKVVSNGSCTTNCIVPVIKVLDDAFGIDSGAITTIHSAMHDQQVIDAYHPDLRRTRAAGRSIIPVDTRLARGIERILPHLEGRFEAIAVRVPTTNVTAMDLSVTLNSDATIEQINQVLREQSERQLAGILDYTEEPLVSIDFNHDPHSSIVDGTQTRVSHKRLVKLLCWCDNEWGFANRLLDTAKTMAEQTEH.

14–15 contributes to the NAD(+) binding site; sequence RI. Residues 156 to 158, Arg-202, 215 to 216, and Arg-238 each bind substrate; these read SCT and TR. Residue Cys-157 is the Nucleophile of the active site. Position 320 (Asn-320) interacts with NAD(+).

Belongs to the glyceraldehyde-3-phosphate dehydrogenase family. Epd subfamily. As to quaternary structure, homotetramer.

It localises to the cytoplasm. It catalyses the reaction D-erythrose 4-phosphate + NAD(+) + H2O = 4-phospho-D-erythronate + NADH + 2 H(+). It participates in cofactor biosynthesis; pyridoxine 5'-phosphate biosynthesis; pyridoxine 5'-phosphate from D-erythrose 4-phosphate: step 1/5. Catalyzes the NAD-dependent conversion of D-erythrose 4-phosphate to 4-phosphoerythronate. This chain is D-erythrose-4-phosphate dehydrogenase, found in Idiomarina loihiensis (strain ATCC BAA-735 / DSM 15497 / L2-TR).